The following is an 886-amino-acid chain: DNA mismatch repair protein MutS (886 aa).

G641–S648 lines the ATP pocket.

Belongs to the DNA mismatch repair MutS family.

Functionally, this protein is involved in the repair of mismatches in DNA. It is possible that it carries out the mismatch recognition step. This protein has a weak ATPase activity. This is DNA mismatch repair protein MutS from Rickettsia felis (strain ATCC VR-1525 / URRWXCal2) (Rickettsia azadi).